We begin with the raw amino-acid sequence, 315 residues long: MSESLRIIFAGTPDFAARHLDALLSSGHNIVGVFTQPDRPAGRGKKLMPSPVKVQAEDKGLPVFQPVSLRPQENQQLVADLQADVMVVVAYGLILPKAVLEMPRLGCINVHGSLLPRWRGAAPIQRSLWAGDAETGVTIMQMDVGLDTGDMLYKLSCPITAEDTSGTLYDKLAELGPQGLITTLKQLADGTAKPEVQDETLVTYAEKLSKEEARIDWSLSAAQLERCIRAFNPWPMSWLEIEGQPVKVWKASVIDTTTKAAPGTILEANKQGIQVATGDGILNLLSMQPAGKKAMSVQDLLNSRREWFVPGNRLA.

113-116 (SLLP) contacts (6S)-5,6,7,8-tetrahydrofolate.

The protein belongs to the Fmt family.

It catalyses the reaction L-methionyl-tRNA(fMet) + (6R)-10-formyltetrahydrofolate = N-formyl-L-methionyl-tRNA(fMet) + (6S)-5,6,7,8-tetrahydrofolate + H(+). Functionally, attaches a formyl group to the free amino group of methionyl-tRNA(fMet). The formyl group appears to play a dual role in the initiator identity of N-formylmethionyl-tRNA by promoting its recognition by IF2 and preventing the misappropriation of this tRNA by the elongation apparatus. The protein is Methionyl-tRNA formyltransferase of Escherichia coli O6:K15:H31 (strain 536 / UPEC).